A 233-amino-acid polypeptide reads, in one-letter code: Putative glutathione peroxidase 7, chloroplastic (233 aa).

The transit peptide at 1 to 69 directs the protein to the chloroplast; it reads MAFSYASFST…KSKNFSVYAR (69 aa). Cysteine 108 is an active-site residue.

The protein belongs to the glutathione peroxidase family.

The protein localises to the plastid. It is found in the chloroplast. The catalysed reaction is 2 glutathione + H2O2 = glutathione disulfide + 2 H2O. May constitute a glutathione peroxidase-like protective system against oxidative stresses. The polypeptide is Putative glutathione peroxidase 7, chloroplastic (GPX7) (Arabidopsis thaliana (Mouse-ear cress)).